The chain runs to 146 residues: Hemoglobin subunit beta-1 (146 aa).

The Globin domain occupies 2–146 (HWTAEEKALI…VAHALARRYH (145 aa)). His92 lines the heme b pocket.

The protein belongs to the globin family. Heterotetramer of two alpha chains and two beta chains. As to expression, red blood cells.

Involved in oxygen transport from the lung to the various peripheral tissues. This Saara hardwickii (Indian spiny-tailed lizard) protein is Hemoglobin subunit beta-1.